The following is a 298-amino-acid chain: MDKKSSHPAGAARDILIELRNAGVYRDGRWLVRNVDLSVERGEIVTLIGPNGAGKSTAAKMALHILKPDEGMVSHKPGLRIGYVPQKINIDRTLPLSVERLMTLTGPLPRKEIDAALEAVGIAHLAKAETAHLSGGEFQRALMARALARKPDIMVLDEPVQGVDFSGEAALYELIARLRDDTGCGVLLISHDLHLVMAATDRVICLNGHVCCSGTPRDVTSSPEYVRLFGSRAVGPLAVYEHHHDHTHLPDGRVLYADGTTADPIAGSTMGPRGHCHVEDGHHHDHEHHHHEGGQPRA.

An ABC transporter domain is found at 17–232 (IELRNAGVYR…PEYVRLFGSR (216 aa)). 49 to 56 (GPNGAGKS) contributes to the ATP binding site. The disordered stretch occupies residues 273 to 298 (RGHCHVEDGHHHDHEHHHHEGGQPRA). Over residues 276-298 (CHVEDGHHHDHEHHHHEGGQPRA) the composition is skewed to basic and acidic residues.

The protein belongs to the ABC transporter superfamily. Zinc importer (TC 3.A.1.15.5) family. As to quaternary structure, the complex is composed of two ATP-binding proteins (ZnuC), two transmembrane proteins (ZnuB) and a solute-binding protein (ZnuA).

It localises to the cell inner membrane. The catalysed reaction is Zn(2+)(out) + ATP(in) + H2O(in) = Zn(2+)(in) + ADP(in) + phosphate(in) + H(+)(in). Part of the ABC transporter complex ZnuABC involved in zinc import. Responsible for energy coupling to the transport system. The chain is Zinc import ATP-binding protein ZnuC from Brucella abortus (strain 2308).